The chain runs to 419 residues: UPF0329 protein ECU07_1890/ECU10_0010 (419 aa).

Over residues 136–165 (RQRKREEETERSVKELVGDEEKAKSKEEKA) the composition is skewed to basic and acidic residues. Residues 136–222 (RQRKREEETE…KGGKKKSKGG (87 aa)) form a disordered region. Residues 213 to 222 (KGGKKKSKGG) show a composition bias toward basic residues.

The protein belongs to the UPF0329 family.

The sequence is that of UPF0329 protein ECU07_1890/ECU10_0010 from Encephalitozoon cuniculi (strain GB-M1) (Microsporidian parasite).